A 263-amino-acid polypeptide reads, in one-letter code: Proline rich transmembrane protein 1B (263 aa).

Residues 1 to 17 (MEAGAGGAGSDTKGGGS) show a composition bias toward gly residues. Residues 1-107 (MEAGAGGAGS…IGFVGEPPPY (107 aa)) form a disordered region. 2 stretches are compositionally biased toward low complexity: residues 37–47 (QMPAQPALPQL) and 75–86 (DAPAQAAGEAGP). 2 helical membrane-spanning segments follow: residues 190–210 (MMESVLVTLFCCLLTGLIAIV) and 238–258 (VLFSLLFGVFVSTSWVIYVVV).

Belongs to the CD225/Dispanin family.

It is found in the membrane. The chain is Proline rich transmembrane protein 1B from Homo sapiens (Human).